Consider the following 371-residue polypeptide: GTPase Obg (371 aa).

In terms of domain architecture, Obg spans 1–159 (MKFVDEAYID…KNLKLELKVL (159 aa)). One can recognise an OBG-type G domain in the interval 160 to 334 (ADVGLLGMPN…LIRTIYKHVH (175 aa)). GTP is bound by residues 166–173 (GMPNAGKS), 191–195 (FTTLH), 213–216 (DIPG), 284–287 (NKLD), and 315–317 (SAL). Residues Ser173 and Thr193 each coordinate Mg(2+).

Belongs to the TRAFAC class OBG-HflX-like GTPase superfamily. OBG GTPase family. Monomer. Mg(2+) is required as a cofactor.

It is found in the cytoplasm. An essential GTPase which binds GTP, GDP and possibly (p)ppGpp with moderate affinity, with high nucleotide exchange rates and a fairly low GTP hydrolysis rate. Plays a role in control of the cell cycle, stress response, ribosome biogenesis and in those bacteria that undergo differentiation, in morphogenesis control. The chain is GTPase Obg from Delftia acidovorans (strain DSM 14801 / SPH-1).